The following is a 552-amino-acid chain: CTP synthase (552 aa).

The tract at residues 1–270 (MTKYVFVTGG…DRIICEELKL (270 aa)) is amidoligase domain. Ser-13 serves as a coordination point for CTP. Ser-13 contacts UTP. ATP is bound by residues 14–19 (SLGKGI) and Asp-71. Residues Asp-71 and Glu-144 each contribute to the Mg(2+) site. Residues 151 to 153 (DIE), 191 to 196 (KTKPTQ), and Lys-227 each bind CTP. UTP contacts are provided by residues 191–196 (KTKPTQ) and Lys-227. Positions 295-547 (TIGMVGKYVD…VEAALANKQA (253 aa)) constitute a Glutamine amidotransferase type-1 domain. Gly-356 serves as a coordination point for L-glutamine. Cys-383 functions as the Nucleophile; for glutamine hydrolysis in the catalytic mechanism. L-glutamine is bound by residues 384 to 387 (LGMQ), Glu-407, and Arg-473. Active-site residues include His-520 and Glu-522.

Belongs to the CTP synthase family. In terms of assembly, homotetramer.

The enzyme catalyses UTP + L-glutamine + ATP + H2O = CTP + L-glutamate + ADP + phosphate + 2 H(+). The catalysed reaction is L-glutamine + H2O = L-glutamate + NH4(+). It catalyses the reaction UTP + NH4(+) + ATP = CTP + ADP + phosphate + 2 H(+). It participates in pyrimidine metabolism; CTP biosynthesis via de novo pathway; CTP from UDP: step 2/2. Its activity is regulated as follows. Allosterically activated by GTP, when glutamine is the substrate; GTP has no effect on the reaction when ammonia is the substrate. The allosteric effector GTP functions by stabilizing the protein conformation that binds the tetrahedral intermediate(s) formed during glutamine hydrolysis. Inhibited by the product CTP, via allosteric rather than competitive inhibition. Functionally, catalyzes the ATP-dependent amination of UTP to CTP with either L-glutamine or ammonia as the source of nitrogen. Regulates intracellular CTP levels through interactions with the four ribonucleotide triphosphates. This is CTP synthase from Burkholderia cenocepacia (strain HI2424).